The sequence spans 319 residues: Cytochrome c biogenesis protein CcsA (319 aa).

8 consecutive transmembrane segments (helical) span residues 11-31 (VNFA…SLAF), 34-54 (ISGL…ALAL), 71-91 (LYES…FIES), 97-117 (LIGA…SLAL), 142-162 (IMMI…LFLI), 227-247 (IIGL…VWAN), 254-274 (WSWD…AAYL), and 288-308 (AILA…VNFL).

Belongs to the CcmF/CycK/Ccl1/NrfE/CcsA family. As to quaternary structure, may interact with Ccs1.

Its subcellular location is the plastid. It localises to the chloroplast thylakoid membrane. In terms of biological role, required during biogenesis of c-type cytochromes (cytochrome c6 and cytochrome f) at the step of heme attachment. The protein is Cytochrome c biogenesis protein CcsA of Porphyra purpurea (Red seaweed).